Consider the following 433-residue polypeptide: MKSAISLLLASAATYVGASPHPEPPQLVLSPSTSTGVHGDEATSAIASSAADDVISDSPFLSFHRDLVQISSISGHERKAGDFVAEFLQAHNFTVVKQPVPSKDGRQPDEDRFNVFAYPSGASAAPKILLTSHIDTVPPFIPYSAARVDNDIRISGRGSVDAKGSVAAQVFAALDILERDPSAPLGLLFVVDEEVGGTGMKVFSDSSLNPSPSPFRAVIFGEPTDLALVSGHKGMLGFELVATGQAAHSGYPWLGHSAVSALLPALLRVDRLGDIPAQEGGLPSSPKYGRTTVNIGRMEGGVAANVVPASAHANVAVRLAAGTPDEARDIVRRAVRDATGGDENVYPDFSEWSEGYPPQDLDTDVDGFEVTTVNYGTDVPNLRIHERADGAPVRRYLYGPGSIHVAHGDHEAITVAQLEEALQGYRKLIEAAM.

The first 18 residues, 1–18, serve as a signal peptide directing secretion; the sequence is MKSAISLLLASAATYVGA. The tract at residues 20–40 is disordered; sequence PHPEPPQLVLSPSTSTGVHGD. Asn92 is a glycosylation site (N-linked (GlcNAc...) asparagine). Asp161 contacts Zn(2+). Glu193 functions as the Proton acceptor in the catalytic mechanism. Glu194 lines the Zn(2+) pocket.

It belongs to the peptidase M20A family. Zn(2+) serves as cofactor.

Its subcellular location is the secreted. The sequence is that of Probable carboxypeptidase ATEG_02905 from Aspergillus terreus (strain NIH 2624 / FGSC A1156).